Consider the following 345-residue polypeptide: Phosphoribosylformylglycinamidine cyclo-ligase (345 aa).

This sequence belongs to the AIR synthase family.

It localises to the cytoplasm. It catalyses the reaction 2-formamido-N(1)-(5-O-phospho-beta-D-ribosyl)acetamidine + ATP = 5-amino-1-(5-phospho-beta-D-ribosyl)imidazole + ADP + phosphate + H(+). The protein operates within purine metabolism; IMP biosynthesis via de novo pathway; 5-amino-1-(5-phospho-D-ribosyl)imidazole from N(2)-formyl-N(1)-(5-phospho-D-ribosyl)glycinamide: step 2/2. This Staphylococcus carnosus (strain TM300) protein is Phosphoribosylformylglycinamidine cyclo-ligase.